We begin with the raw amino-acid sequence, 424 residues long: Protein CLP1 homolog (424 aa).

ATP contacts are provided by residues glutamate 19, lysine 60, and 122–127; that span reads DVGKST.

It belongs to the Clp1 family. Clp1 subfamily.

Its subcellular location is the nucleus. Required for endonucleolytic cleavage during polyadenylation-dependent pre-mRNA 3'-end formation. The protein is Protein CLP1 homolog (cbc) of Aedes aegypti (Yellowfever mosquito).